The primary structure comprises 334 residues: L-lactate dehydrogenase (334 aa).

A disordered region spans residues 1–22 (MASTKGKLIHEMVPSKERDPPH). Residues 8 to 22 (LIHEMVPSKERDPPH) show a composition bias toward basic and acidic residues. NAD(+)-binding positions include 31-59 (GQVGMAAAISVLLRDLADELALVDVVEDR) and Arg101. Substrate is bound by residues Arg108, Asn140, and Arg171. Asn140 is a binding site for NAD(+). His195 acts as the Proton acceptor in catalysis. A substrate-binding site is contributed by Thr250.

This sequence belongs to the LDH/MDH superfamily. LDH family. In terms of assembly, homotetramer.

The protein localises to the cytoplasm. It catalyses the reaction (S)-lactate + NAD(+) = pyruvate + NADH + H(+). Its pathway is fermentation; pyruvate fermentation to lactate; (S)-lactate from pyruvate: step 1/1. The polypeptide is L-lactate dehydrogenase (Petromyzon marinus (Sea lamprey)).